We begin with the raw amino-acid sequence, 571 residues long: Proline--tRNA ligase (571 aa).

Belongs to the class-II aminoacyl-tRNA synthetase family. ProS type 1 subfamily. As to quaternary structure, homodimer.

The protein localises to the cytoplasm. The enzyme catalyses tRNA(Pro) + L-proline + ATP = L-prolyl-tRNA(Pro) + AMP + diphosphate. Catalyzes the attachment of proline to tRNA(Pro) in a two-step reaction: proline is first activated by ATP to form Pro-AMP and then transferred to the acceptor end of tRNA(Pro). As ProRS can inadvertently accommodate and process non-cognate amino acids such as alanine and cysteine, to avoid such errors it has two additional distinct editing activities against alanine. One activity is designated as 'pretransfer' editing and involves the tRNA(Pro)-independent hydrolysis of activated Ala-AMP. The other activity is designated 'posttransfer' editing and involves deacylation of mischarged Ala-tRNA(Pro). The misacylated Cys-tRNA(Pro) is not edited by ProRS. The protein is Proline--tRNA ligase of Pseudomonas aeruginosa (strain LESB58).